The chain runs to 125 residues: MKIAILVIALGLAGCVAQGPVVNQSDVGKIVNCSSKFYNPNVKCYKEAPKQTVEQMQANFDEAIRPDESAQAYRNSDVITREEKIENYCAELWANWANNYQWRTGKNAPMEYVVNSYNSCVKNLT.

This is an uncharacterized protein from Escherichia coli (Bacteriophage T4).